The sequence spans 221 residues: Mitochondrial cardiolipin hydrolase (221 aa).

Over 1–4 the chain is Mitochondrial intermembrane; the sequence is MGRS. Residues 1-38 are required for mitochondrial localization; it reads MGRSSWRLVFAAGAGLALALEALPWLMRWLLAGRRPRR. Residues 5–27 traverse the membrane as a helical segment; that stretch reads SWRLVFAAGAGLALALEALPWLM. Residues 28–221 lie on the Cytoplasmic side of the membrane; it reads RWLLAGRRPR…SFFPQKHRGH (194 aa). A C3H1-type; atypical zinc finger spans residues 44-75; the sequence is PSQVTCTEALLQAPGLPPGPSGCPCSLPHSES. Positions 148 to 175 constitute a PLD phosphodiesterase domain; sequence DLGYMHHKFAIVDKKVLITGSLNWTTQA. Residues His153, Lys155, and Asp160 contribute to the active site.

It belongs to the phospholipase D family. MitoPLD/Zucchini subfamily. Homodimer. Interacts with MOV10L1. Interacts with MIGA1 and MIGA2; possibly facilitating homodimer formation. Interacts with GK2. As to expression, predominantly expressed in testis (at protein level) and in growing ovary. Also expressed in the brain, eye and urinary bladder (at protein level), but its levels were low or undetectable in other organs.

It is found in the mitochondrion outer membrane. It localises to the nucleus membrane. The protein resides in the cell membrane. Its subcellular location is the golgi apparatus. It catalyses the reaction a cardiolipin + H2O = a 1,2-diacyl-sn-glycero-3-phospho-(1'-sn-glycerol) + a 1,2-diacyl-sn-glycero-3-phosphate + H(+). With respect to regulation, single stranded DNA (ssDNA) hydrolase activity does not depend upon, but is stimulated by the presence of Ca(2+) and Mn(2+). MIGA1 and MIGA2 increase PLD6 self-association affinity and affects the homodimer conformation facilitating its phospholipase activity over the nuclease activity. MYC induces its expression and stimulates its phospholipase activity. In terms of biological role, presents phospholipase and nuclease activities, depending on the different physiological conditions. Interaction with Mitoguardin (MIGA1 or MIGA2) affects the dimer conformation, facilitating the lipase activity over the nuclease activity. Plays a key role in mitochondrial fusion and fission via its phospholipase activity. In its phospholipase role, it uses the mitochondrial lipid cardiolipin as substrate to generate phosphatidate (PA or 1,2-diacyl-sn-glycero-3-phosphate), a second messenger signaling lipid. Production of PA facilitates Mitofusin-mediated fusion, whereas the cleavage of PA by the Lipin family of phosphatases produces diacylgycerol (DAG) which promotes mitochondrial fission. Both Lipin and DAG regulate mitochondrial dynamics and membrane fusion/fission, important processes for adapting mitochondrial metabolism to changes in cell physiology. Mitochondrial fusion enables cells to cope with the increased nucleotide demand during DNA synthesis. Mitochondrial function and dynamics are closely associated with biological processes such as cell growth, proliferation, and differentiation. Mediator of MYC activity, promotes mitochondrial fusion and activates AMPK which in turn inhibits YAP/TAZ, thereby inducing cell growth and proliferation. The endonuclease activity plays a critical role in PIWI-interacting RNA (piRNA) biogenesis during spermatogenesis. Implicated in spermatogenesis and sperm fertility in testicular germ cells, its single strand-specific nuclease activity is critical for the biogenesis/maturation of PIWI-interacting RNA (piRNA). MOV10L1 selectively binds to piRNA precursors and funnels them to the endonuclease that catalyzes the first cleavage step of piRNA processing to generate piRNA intermediate fragments that are subsequently loaded to Piwi proteins. Cleaves either DNA or RNA substrates with similar affinity, producing a 5' phosphate end, in this way it participates in the processing of primary piRNA transcripts. piRNAs provide essential protection against the activity of mobile genetic elements. piRNA-mediated transposon silencing is thus critical for maintaining genome stability, in particular in germline cells when transposons are mobilized as a consequence of wide-spread genomic demethylation. PA may act as signaling molecule in the recognition/transport of the precursor RNAs of primary piRNAs. Interacts with tesmin in testes, suggesting a role in spermatogenesis via association with its interacting partner. The sequence is that of Mitochondrial cardiolipin hydrolase (Pld6) from Mus musculus (Mouse).